The chain runs to 416 residues: CC-adding tRNA nucleotidyltransferase (416 aa).

Position 31 to 34 (31 to 34 (GAVR)) interacts with CTP. Mg(2+) contacts are provided by Asp46 and Asp48. Residues 106 to 107 (RD), Asn111, 148 to 157 (DPLRLLRAYR), and Arg188 contribute to the CTP site.

It belongs to the tRNA nucleotidyltransferase/poly(A) polymerase family. Requires Mg(2+) as cofactor.

It carries out the reaction a tRNA precursor + 2 CTP = a tRNA with a 3' CC end + 2 diphosphate. Its function is as follows. tRNA nucleotidyltransferase involved in the synthesis of the tRNA CCA terminus. Adds the two cytidine residues to tRNA. The sequence is that of CC-adding tRNA nucleotidyltransferase from Synechocystis sp. (strain ATCC 27184 / PCC 6803 / Kazusa).